Here is a 161-residue protein sequence, read N- to C-terminus: Epididymal protein 13 (161 aa).

The N-terminal stretch at 1–23 is a signal peptide; the sequence is MHRSEPFLKMSLLILLFLGLAEA. Asn56 carries N-linked (GlcNAc...) asparagine glycosylation.

It localises to the secreted. In Homo sapiens (Human), this protein is Epididymal protein 13.